Reading from the N-terminus, the 274-residue chain is Protein STAY-GREEN, chloroplastic (274 aa).

Residues 1–48 constitute a chloroplast transit peptide; sequence MAAATSTMSLLPPITQQQRWHAADSLVVLASRCHNSRRRRRCRYVVPR.

It belongs to the staygreen family. Interacts with LHCII complex. In terms of tissue distribution, expressed in leaves, roots and developing seeds.

It localises to the plastid. The protein resides in the chloroplast membrane. It is found in the chloroplast stroma. Functionally, involved in the disassembling mechanism of the intact light-harvesting complex of photosystem II (LHCII) in the thylakoid membranes. Required to trigger chlorophyll degradation during natural and dark-induced leaf senescence. This chain is Protein STAY-GREEN, chloroplastic (SGR), found in Oryza sativa subsp. japonica (Rice).